Here is a 299-residue protein sequence, read N- to C-terminus: Circadian clock oscillator protein KaiA (299 aa).

The 169-residue stretch at 1-169 (MVSKLSLYLV…RLAEKLRERL (169 aa)) folds into the KaiA N-terminal domain. The psR domain, binds oxidized quinones stretch occupies residues 3 to 135 (SKLSLYLVTP…LHLAPSCALS (133 aa)). A flexible linker region spans residues 170–178 (GYLGVYYKR). Residues 179–287 (NPKYFYRSLS…CEMYRRSIPR (109 aa)) enclose the KaiA C-terminal domain.

Homodimer. The KaiABC complex composition changes during the circadian cycle to control KaiC phosphorylation. Complexes KaiC(6), KaiA(2-4):KaiC(6), KaiB(6):KaiC(6) and KaiC(6):KaiB(6):KaiA(12) are among the most important forms, many form cooperatively. KaiA and CikA bind to the same region of the KaiB(fs) form and therefore compete.

Its function is as follows. Key component of the KaiABC oscillator complex, which constitutes the main circadian regulator in cyanobacteria. Complex composition changes during the circadian cycle to control KaiC phosphorylation. KaiA stimulates KaiC autophosphorylation, while KaiB sequesters KaiA, leading to KaiC autodephosphorylation. KaiA binding to the KaiC CII domain during the subjective day yields KaiA(2-4):KaiC(6) complexes which stimulate KaiC autophosphorylation. Phospho-Ser-431 KaiC accumulation triggers binding of KaiB during the subjective night to form the KaiB(6):KaiC(6) complex, leading to changes in the output regulators CikA and SasA. KaiB(6):KaiC(6) formation exposes a site for KaiA binding on KaiB that sequesters KaiA from KaiC's CII domain, making the KaiC(6):KaiB(6):KaiA(12) complex resulting in KaiC autodephosphorylation. Complete dephosphorylation of KaiC leads to dissociation of KaiA(2):KaiB(1), completing 1 cycle of the Kai oscillator. In terms of biological role, binds oxidized quinones via the N-terminal PsR domain, allowing it to sense redox changes and possibly mediate clock input. In Picosynechococcus sp. (strain ATCC 27264 / PCC 7002 / PR-6) (Agmenellum quadruplicatum), this protein is Circadian clock oscillator protein KaiA.